Consider the following 284-residue polypeptide: Efem/EfeO family lipoprotein (284 aa).

The N-terminal stretch at 1-17 (MKKLTTLLLASTLLIAA) is a signal peptide. Cysteine 18 carries N-palmitoyl cysteine lipidation. Cysteine 18 is lipidated: S-diacylglycerol cysteine.

The protein belongs to the EfeM/EfeO family.

The protein resides in the cell membrane. The chain is Efem/EfeO family lipoprotein from Staphylococcus aureus (strain NCTC 8325 / PS 47).